Reading from the N-terminus, the 468-residue chain is Methionine aminopeptidase 2 (468 aa).

Basic and acidic residues predominate over residues 1-10 (MGSKTFEGEG). The segment at 1–106 (MGSKTFEGEG…PPRVPLDDLF (106 aa)) is disordered. The span at 16 to 25 (DPSNSTSPNS) shows a compositional bias: polar residues. Over residues 31–40 (RGAHLSRDGD) the composition is skewed to basic and acidic residues. The span at 46-56 (GDGDDGADGDE) shows a compositional bias: acidic residues. Positions 61–75 (VTTTPLTEQQPSSET) are enriched in polar residues. The span at 78–90 (KKKKRRKPKKKIS) shows a compositional bias: basic residues. His219 serves as a coordination point for substrate. Residues Asp240, Asp251, and His320 each contribute to the a divalent metal cation site. Residue His328 coordinates substrate. Residues Glu353 and Glu449 each contribute to the a divalent metal cation site.

This sequence belongs to the peptidase M24A family. Methionine aminopeptidase eukaryotic type 2 subfamily. It depends on Co(2+) as a cofactor. Zn(2+) serves as cofactor. The cofactor is Mn(2+). Fe(2+) is required as a cofactor.

The protein resides in the cytoplasm. The catalysed reaction is Release of N-terminal amino acids, preferentially methionine, from peptides and arylamides.. Cotranslationally removes the N-terminal methionine from nascent proteins. The N-terminal methionine is often cleaved when the second residue in the primary sequence is small and uncharged (Met-Ala-, Cys, Gly, Pro, Ser, Thr, or Val). This chain is Methionine aminopeptidase 2, found in Aspergillus oryzae (strain ATCC 42149 / RIB 40) (Yellow koji mold).